The following is an 86-amino-acid chain: Small ribosomal subunit protein bS20 (86 aa).

A disordered region spans residues 1–25 (MANIKSQQKRNKTNERARLRNKSVK).

Belongs to the bacterial ribosomal protein bS20 family.

In terms of biological role, binds directly to 16S ribosomal RNA. The sequence is that of Small ribosomal subunit protein bS20 from Mycobacterium avium (strain 104).